A 374-amino-acid polypeptide reads, in one-letter code: Glutamate 5-kinase (374 aa).

ATP is bound at residue Lys16. Residues Ser56, Asp143, and Asn155 each contribute to the substrate site. 175-176 (TD) provides a ligand contact to ATP. In terms of domain architecture, PUA spans 282-360 (RGRVVLDAGA…SEIEAVLGYV (79 aa)).

It belongs to the glutamate 5-kinase family.

It is found in the cytoplasm. It carries out the reaction L-glutamate + ATP = L-glutamyl 5-phosphate + ADP. It functions in the pathway amino-acid biosynthesis; L-proline biosynthesis; L-glutamate 5-semialdehyde from L-glutamate: step 1/2. Catalyzes the transfer of a phosphate group to glutamate to form L-glutamate 5-phosphate. The polypeptide is Glutamate 5-kinase (Ralstonia pickettii (strain 12J)).